We begin with the raw amino-acid sequence, 159 residues long: Ribonuclease H (159 aa).

One can recognise an RNase H type-1 domain in the interval 4–145 (THKQVNIYTD…CDKLARDAAE (142 aa)). Mg(2+) is bound by residues Asp-13, Glu-51, Asp-73, and Asp-137.

It belongs to the RNase H family. Monomer. Requires Mg(2+) as cofactor.

It is found in the cytoplasm. The enzyme catalyses Endonucleolytic cleavage to 5'-phosphomonoester.. In terms of biological role, endonuclease that specifically degrades the RNA of RNA-DNA hybrids. The polypeptide is Ribonuclease H (Shewanella denitrificans (strain OS217 / ATCC BAA-1090 / DSM 15013)).